Consider the following 471-residue polypeptide: Ribulose bisphosphate carboxylase large chain (471 aa).

Residues Asn-115 and Thr-165 each contribute to the substrate site. Lys-167 serves as the catalytic Proton acceptor. Lys-169 serves as a coordination point for substrate. 3 residues coordinate Mg(2+): Lys-193, Asp-195, and Glu-196. Residue Lys-193 is modified to N6-carboxylysine. His-286 (proton acceptor) is an active-site residue. Substrate-binding residues include Arg-287, His-319, and Ser-371.

Belongs to the RuBisCO large chain family. Type I subfamily. Heterohexadecamer of 8 large chains and 8 small chains. Mg(2+) serves as cofactor.

The protein resides in the carboxysome. The catalysed reaction is 2 (2R)-3-phosphoglycerate + 2 H(+) = D-ribulose 1,5-bisphosphate + CO2 + H2O. It catalyses the reaction D-ribulose 1,5-bisphosphate + O2 = 2-phosphoglycolate + (2R)-3-phosphoglycerate + 2 H(+). Functionally, ruBisCO catalyzes two reactions: the carboxylation of D-ribulose 1,5-bisphosphate, the primary event in carbon dioxide fixation, as well as the oxidative fragmentation of the pentose substrate in the photorespiration process. Both reactions occur simultaneously and in competition at the same active site. This Prochlorococcus marinus (strain MIT 9515) protein is Ribulose bisphosphate carboxylase large chain.